The sequence spans 338 residues: Clavatol oxidase claD (338 aa).

Positions 193 to 299 (DPMSLLRLLH…RYSVVFFYDG (107 aa)) constitute a Fe2OG dioxygenase domain. Residues histidine 222, aspartate 224, and histidine 280 each coordinate Fe cation. A 2-oxoglutarate-binding site is contributed by arginine 290.

This sequence belongs to the iron/ascorbate-dependent oxidoreductase family. The cofactor is Fe(2+).

It carries out the reaction clavatol + 2-oxoglutarate + O2 = hydroxyclavatol + succinate + CO2. The protein operates within secondary metabolite biosynthesis. In terms of biological role, 2-oxoglutarate-dependent dioxygenase; part of the cla gene cluster that produces clavatol and ortho-quinone methide. The clavatol biosynthesis cluster cla and the terrestric acid cluster tra are both involved in the production of peniphenones and penilactones. The non-reducing PKS claF is responsible for the formation of clavatol from successive condensations of 3 malonyl-CoA units, presumably with a simple acetyl-CoA starter unit, and 2 methylation steps. The esterase claE probably collaborates with claF by catalyzing the hydrolysis of ACP-bound acyl intermediates to free the ACP from stalled intermediates. The clavatol oxidase claD then converts clavatol to hydroxyclavatol. Spontaneous dehydration of hydroxyclavatol leads to the accumulation of the highly active ortho-quinone methide. On the other hand, the PKS-NRPS hybrid traA is involved in the formation of crustosic acid, with the help of traB and traD. The polyketide synthase module (PKS) of traA is responsible for the synthesis of the polyketide backbone via the condensation of an acetyl-CoA starter unit with 3 malonyl-CoA units. The downstream nonribosomal peptide synthetase (NRPS) module then amidates the carboxyl end of the polyketide with L-malic acid. Because traA lacks a designated enoylreductase (ER) domain, the required activity is provided the enoyl reductase traG. Crustosic acid undergoes decarboxylation and isomerization to the terrestric acid, catalyzed by the 2-oxoglutarate-dependent dioxygenase traH. Both acids are further converted to the 2 gamma-butyrolactones (R)-5-methyltetronic acid and (S)-5-carboxylmethyltetronic acid, with involvement of the cytochrome P450 monooxygenase claJ. Spontaneous addition of the methide to these gamma-butyrolactones leads to peniphenone D and penilactone D, which undergo again stereospecific attacking by methide to give penilactones A and B. The chain is Clavatol oxidase claD from Penicillium crustosum (Blue mold fungus).